Consider the following 331-residue polypeptide: MTENTHETAPNTADTDTADFDTADTDRADGAADVSTNTPNETGEAAIPELVIISGMSGAGRSTAAKCLEDLGWFVVDNLPPALIPTMVELGARSQGNVARIAVVVDVRGRRFFDNLRESLADLEAKHVTRRIVFLESSDDALVRRFESVRRPHPLQGDGRIVDGIAAERDLLRELRGDADLVIDTSSLNVHELRAKMDAQFAGESEPELRATVMSFGYKYGLPVDADLVVDCRFLPNPHWVPELRPFTGVNEEVSDYVFDQPGAKEFLNQYTELLQLIAAGYRREGKRYVTIAVGCTGGKHRSVAMSEKLSARLAAEGIETVLVHRDMGRE.

The disordered stretch occupies residues 1–43; that stretch reads MTENTHETAPNTADTDTADFDTADTDRADGAADVSTNTPNETG. 55 to 62 is an ATP binding site; the sequence is GMSGAGRS. A GTP-binding site is contributed by 106–109; that stretch reads DVRG.

Belongs to the RapZ-like family.

Functionally, displays ATPase and GTPase activities. This Streptomyces griseus subsp. griseus (strain JCM 4626 / CBS 651.72 / NBRC 13350 / KCC S-0626 / ISP 5235) protein is Nucleotide-binding protein SGR_5570.